A 447-amino-acid polypeptide reads, in one-letter code: N-succinylarginine dihydrolase (447 aa).

Substrate-binding positions include 19 to 28 (AGLSFGNEAS), asparagine 110, and 137 to 138 (HR). The active site involves glutamate 174. Substrate is bound at residue arginine 212. Histidine 248 is an active-site residue. Substrate is bound by residues aspartate 250 and asparagine 359. Residue cysteine 365 is the Nucleophile of the active site.

The protein belongs to the succinylarginine dihydrolase family. In terms of assembly, homodimer.

The enzyme catalyses N(2)-succinyl-L-arginine + 2 H2O + 2 H(+) = N(2)-succinyl-L-ornithine + 2 NH4(+) + CO2. Its pathway is amino-acid degradation; L-arginine degradation via AST pathway; L-glutamate and succinate from L-arginine: step 2/5. In terms of biological role, catalyzes the hydrolysis of N(2)-succinylarginine into N(2)-succinylornithine, ammonia and CO(2). The chain is N-succinylarginine dihydrolase from Escherichia coli (strain SMS-3-5 / SECEC).